The sequence spans 295 residues: tRNA pseudouridine synthase A (295 aa).

The active-site Nucleophile is Asp-67. Position 125 (Tyr-125) interacts with substrate.

This sequence belongs to the tRNA pseudouridine synthase TruA family. In terms of assembly, homodimer.

The catalysed reaction is uridine(38/39/40) in tRNA = pseudouridine(38/39/40) in tRNA. Functionally, formation of pseudouridine at positions 38, 39 and 40 in the anticodon stem and loop of transfer RNAs. The chain is tRNA pseudouridine synthase A from Prochlorococcus marinus (strain MIT 9303).